The following is a 184-amino-acid chain: UPF0149 protein PputW619_5026 (184 aa).

Belongs to the UPF0149 family.

The sequence is that of UPF0149 protein PputW619_5026 from Pseudomonas putida (strain W619).